The chain runs to 181 residues: Mating-type protein A1 (181 aa).

The segment at residues 122-181 (DKKKRRHIPESSKELLEKAFKVKRFPNSKERERIARECGISPLQVRVWFTNKRARSKSRA) is a DNA-binding region (homeobox).

Belongs to the MATA1 family.

It localises to the nucleus. In terms of biological role, mating type proteins are sequence specific DNA-binding proteins that act as master switches in yeast differentiation by controlling gene expression in a cell type-specific fashion. This chain is Mating-type protein A1 (MATA1), found in Pichia angusta (Yeast).